The following is a 268-amino-acid chain: Glucosamine-6-phosphate deaminase (268 aa).

Catalysis depends on Asp-72, which acts as the Proton acceptor; for enolization step. Asp-141 acts as the For ring-opening step in catalysis. His-143 serves as the catalytic Proton acceptor; for ring-opening step. Residue Glu-148 is the For ring-opening step of the active site.

This sequence belongs to the glucosamine/galactosamine-6-phosphate isomerase family. NagB subfamily. Homohexamer.

It catalyses the reaction alpha-D-glucosamine 6-phosphate + H2O = beta-D-fructose 6-phosphate + NH4(+). The protein operates within amino-sugar metabolism; N-acetylneuraminate degradation; D-fructose 6-phosphate from N-acetylneuraminate: step 5/5. With respect to regulation, allosterically activated by N-acetylglucosamine 6-phosphate (GlcNAc6P). Catalyzes the reversible isomerization-deamination of glucosamine 6-phosphate (GlcN6P) to form fructose 6-phosphate (Fru6P) and ammonium ion. This is Glucosamine-6-phosphate deaminase from Histophilus somni (strain 2336) (Haemophilus somnus).